The sequence spans 92 residues: Small ribosomal subunit protein uS19 (92 aa).

It belongs to the universal ribosomal protein uS19 family.

Functionally, protein S19 forms a complex with S13 that binds strongly to the 16S ribosomal RNA. The polypeptide is Small ribosomal subunit protein uS19 (Bacillus thuringiensis subsp. konkukian (strain 97-27)).